The primary structure comprises 287 residues: uncharacterized protein (287 aa).

Residues 133–239 (CEVGKTKKMT…KNIIGISIVQ (107 aa)) form the THUMP domain. The segment at 257–287 (ENTKSIPNDSKLDNFDRDKNQIINDKAEHAE) is disordered. Positions 266–287 (SKLDNFDRDKNQIINDKAEHAE) are enriched in basic and acidic residues.

This is an uncharacterized protein from Schizosaccharomyces pombe (strain 972 / ATCC 24843) (Fission yeast).